Consider the following 304-residue polypeptide: 17-beta-hydroxysteroid dehydrogenase 13 (304 aa).

A signal peptide spans 1 to 19 (MNLILEFLLLVGVIIYSYL). Position 33 is a phosphoserine (Ser-33). Residue 40–67 (LITGAGHGIGRLTAYEFAKQKSRLVLWD) participates in NAD(+) binding. Lys-79 is modified (N6-acetyllysine). Residue Ser-172 participates in substrate binding. The active-site Proton acceptor is Tyr-185. An NAD(+)-binding site is contributed by Lys-189. The segment at 276 to 304 (SSKHPHGGSQQPVTPIPGDLTPSSDFLKH) is disordered.

Belongs to the short-chain dehydrogenases/reductases (SDR) family. As to expression, expressed predominantly in the liver (at protein level).

The protein localises to the lipid droplet. It is found in the endoplasmic reticulum. It catalyses the reaction 17beta-estradiol + NAD(+) = estrone + NADH + H(+). It carries out the reaction all-trans-retinol + NAD(+) = all-trans-retinal + NADH + H(+). The catalysed reaction is all-trans-retinal + NAD(+) + H2O = all-trans-retinoate + NADH + 2 H(+). Functionally, plays a pivotal role in hepatic lipid metabolism. In vitro, it catalyzes the oxidation of a variety of lipid substrates, including 17beta-estradiol, retinol, retinal, and leukotriene B4. In Mus musculus (Mouse), this protein is 17-beta-hydroxysteroid dehydrogenase 13 (Hsd17b13).